A 211-amino-acid polypeptide reads, in one-letter code: Large ribosomal subunit protein uL4 (211 aa).

The segment covering 41–53 (QAHSRQGTASTLT) has biased composition (polar residues). The segment at 41–78 (QAHSRQGTASTLTRAEVRGGGRKPYKQKGTGRARQGTI) is disordered. A compositionally biased stretch (basic residues) spans 60 to 71 (GGRKPYKQKGTG).

Belongs to the universal ribosomal protein uL4 family. In terms of assembly, part of the 50S ribosomal subunit.

Its function is as follows. One of the primary rRNA binding proteins, this protein initially binds near the 5'-end of the 23S rRNA. It is important during the early stages of 50S assembly. It makes multiple contacts with different domains of the 23S rRNA in the assembled 50S subunit and ribosome. Forms part of the polypeptide exit tunnel. The chain is Large ribosomal subunit protein uL4 from Prochlorococcus marinus (strain MIT 9313).